Here is a 662-residue protein sequence, read N- to C-terminus: Glutathione hydrolase 7 (662 aa).

At 1–106 the chain is on the cytoplasmic side; that stretch reads MAAENEASQE…ASECSCRQDG (106 aa). A phosphoserine mark is found at S17, S72, S79, and S83. Positions 26 to 90 are disordered; it reads SFPRLPEDEP…DGSPLRETRK (65 aa). Residues 72–83 show a composition bias toward low complexity; that stretch reads SSSSEMGSQDGS. The chain crosses the membrane as a helical; Signal-anchor for type II membrane protein span at residues 107-127; the sequence is LTVIVTACLTFATGVTVALIM. Residues 128-662 lie on the Extracellular side of the membrane; it reads QIYFGDPQIF…SPDAAGATIL (535 aa). N-linked (GlcNAc...) asparagine glycans are attached at residues N198, N267, N283, N330, N353, N394, N452, N519, and N586.

This sequence belongs to the gamma-glutamyltransferase family. In terms of assembly, heterodimer composed of the light and heavy chains. The active site is located in the light chain. Post-translationally, cleaved by autocatalysis into a large and a small subunit and the autocatalytic cleavage is essential to the functional activation of the enzyme.

It is found in the membrane. It carries out the reaction an N-terminal (5-L-glutamyl)-[peptide] + an alpha-amino acid = 5-L-glutamyl amino acid + an N-terminal L-alpha-aminoacyl-[peptide]. The catalysed reaction is glutathione + H2O = L-cysteinylglycine + L-glutamate. It catalyses the reaction an S-substituted glutathione + H2O = an S-substituted L-cysteinylglycine + L-glutamate. It participates in sulfur metabolism; glutathione metabolism. Hydrolyzes and transfers gamma-glutamyl moieties from glutathione and other gamma-glutamyl compounds to acceptors. In Bos taurus (Bovine), this protein is Glutathione hydrolase 7.